The chain runs to 76 residues: Transcription attenuation protein MtrB (76 aa).

The protein belongs to the MtrB family. Oligomer of 11 identical subunits arranged in doughnut-like structure.

Functionally, required for transcription attenuation control in the Trp operon. This trans-acting factor seems to recognize a 10 bases nucleotide sequence in the Trp leader transcript causing transcription termination. Binds the leader RNA only in presence of L-tryptophan. The sequence is that of Transcription attenuation protein MtrB (mtrB) from Bacillus pumilus (Bacillus mesentericus).